The following is a 158-amino-acid chain: Ribonucleases P/MRP protein subunit POP6 (158 aa).

Positions 51-71 (KNDNIKKSVNKLDKQINMADR) form a coiled coil.

As to quaternary structure, component of nuclear RNase P and RNase MRP complexes. RNase P consists of an RNA moiety and at least 9 protein subunits including POP1, POP3, POP4, POP5, POP6, POP7, POP8, RPP1 and RPR2. RNase MRP complex consists of an RNA moiety and at least 10 protein subunits including POP1, POP3, POP4, POP5, POP6, POP7, POP8, RMP1, RPP1 and SNM1, many of which are shared with the RNase P complex.

It localises to the nucleus. The catalysed reaction is Endonucleolytic cleavage of RNA, removing 5'-extranucleotides from tRNA precursor.. In terms of biological role, component of ribonuclease P, a protein complex that generates mature tRNA molecules by cleaving their 5'-ends. Also a component of RNase MRP, which cleaves pre-rRNA sequences. This Saccharomyces cerevisiae (strain ATCC 204508 / S288c) (Baker's yeast) protein is Ribonucleases P/MRP protein subunit POP6 (POP6).